We begin with the raw amino-acid sequence, 390 residues long: MPSDCKYSVDTELVHVEGNEDQYHASSVPIYQSATFKQPCLEHMGKFDYTRSGNPTRSVLQVHLAKLMKAKHAFVTSNGMSALDMILRCCKSNSHVVAGHDLYGGSDRLLSFNQRQYGFKVDNVDTSDLAAFEAALRPDTNLVLIESPTNPRISICDIRAIVKITRSKAKDALLVMDNTMLSPVLCNPLDFGYDIVYESATKYLSGHHDLMGGVIATKSDEIAKSVFFNINAMGAAMAPFECFLLLRGIKTMGLRVERAQQNAIEIAKFLKSKGLQVNFPGLDPDAKSTAIFYSFARGPGAVMSVFTGDVEVSKTIVNTTKLFEISVSFGAVNSLISMPAYMSHASIKKEVRDARGLSEDLIRICVGIENVDDLKADLENALAQANFKQN.

An N6-(pyridoxal phosphate)lysine modification is found at lysine 202.

Belongs to the trans-sulfuration enzymes family. The cofactor is pyridoxal 5'-phosphate.

The protein resides in the cytoplasm. Its subcellular location is the nucleus. The enzyme catalyses L,L-cystathionine + H2O = L-homocysteine + pyruvate + NH4(+). It carries out the reaction an S-substituted L-cysteine + H2O = a thiol + pyruvate + NH4(+). Its pathway is amino-acid biosynthesis; L-methionine biosynthesis via de novo pathway; L-homocysteine from L-cystathionine: step 1/1. The protein is Cystathionine beta-lyase (str3) of Schizosaccharomyces pombe (strain 972 / ATCC 24843) (Fission yeast).